We begin with the raw amino-acid sequence, 326 residues long: DNA-binding death effector domain-containing protein 2 (326 aa).

Residues S25 to R104 enclose the DED domain. The short motif at R104 to P109 is the Nuclear localization signal element. The interval R104–V194 is disordered. A compositionally biased stretch (low complexity) spans S136 to Q146. The Bipartite nuclear localization signal signature appears at K155–R173. Residues K155–G174 are compositionally biased toward basic residues. Residues A175–E191 are compositionally biased toward low complexity.

In terms of assembly, interacts with CASP8, CASP10 and GTF3C3. Homodimerizes and heterodimerizes with DEDD. Expressed in most tissues. High levels were found in liver, kidney, heart, ovary, spleen, testes, skeletal muscle and peripheral blood leukocytes. Expression was absent or low in colon and small intestine. Expression is relatively high in the tumor cell lines chronic myologenous leukemia K-562 and the colorectal adenocarcinoma SW480. Expression is moderate in the cervical carcinoma HeLa, the Burkitt's lymphoma Raji, the lung carcinoma A-549, and the melanoma G-361. In contrast, two leukemia cell lines, HL-60 (promyelocytic leukemia) and MOLT-4 (lymphoblastic leukemia), show relatively low levels.

The protein localises to the nucleus. It is found in the nucleolus. Its function is as follows. May play a critical role in death receptor-induced apoptosis and may target CASP8 and CASP10 to the nucleus. May regulate degradation of intermediate filaments during apoptosis. May play a role in the general transcription machinery in the nucleus and might be an important regulator of the activity of GTF3C3. The sequence is that of DNA-binding death effector domain-containing protein 2 (DEDD2) from Homo sapiens (Human).